The primary structure comprises 150 residues: Nucleoside diphosphate kinase (150 aa).

The ATP site is built by lysine 9, phenylalanine 57, arginine 85, threonine 91, arginine 102, and asparagine 112. Catalysis depends on histidine 115, which acts as the Pros-phosphohistidine intermediate.

This sequence belongs to the NDK family. Homotetramer. Mg(2+) serves as cofactor.

It localises to the cytoplasm. It catalyses the reaction a 2'-deoxyribonucleoside 5'-diphosphate + ATP = a 2'-deoxyribonucleoside 5'-triphosphate + ADP. It carries out the reaction a ribonucleoside 5'-diphosphate + ATP = a ribonucleoside 5'-triphosphate + ADP. In terms of biological role, major role in the synthesis of nucleoside triphosphates other than ATP. The ATP gamma phosphate is transferred to the NDP beta phosphate via a ping-pong mechanism, using a phosphorylated active-site intermediate. This chain is Nucleoside diphosphate kinase, found in Thermosynechococcus vestitus (strain NIES-2133 / IAM M-273 / BP-1).